Consider the following 118-residue polypeptide: Holo-[acyl-carrier-protein] synthase (118 aa).

Residues D8 and E60 each contribute to the Mg(2+) site.

The protein belongs to the P-Pant transferase superfamily. AcpS family. Mg(2+) is required as a cofactor.

It is found in the cytoplasm. The enzyme catalyses apo-[ACP] + CoA = holo-[ACP] + adenosine 3',5'-bisphosphate + H(+). Transfers the 4'-phosphopantetheine moiety from coenzyme A to a Ser of acyl-carrier-protein. The sequence is that of Holo-[acyl-carrier-protein] synthase from Wolbachia sp. subsp. Drosophila simulans (strain wRi).